Consider the following 341-residue polypeptide: MRVLGLETSCDETGVALYDSERGLLADALFSQIDLHRVYGGVVPELASRDHVKRMLPLIRQVLDESGCTPADIDAIAYTAGPGLVGALLVGASCAQAVAFAWGVPAVGVHHMEGHLLAPMLEEQPPRFPFVALLVSGGHTQLVRVDGIGRYQLLGESVDDAAGEAFDKTAKLIGLGYPGGPEIARLAERGTPGRFVFPRPMTDRPGLDFSFSGLKTFTLNTWQRCVEAGDDSEQTRCDIALAFQTAVVETLLIKCRRALKQTGLKNLVIAGGVSANQALRSGLEKMLGEMKGQVFYARPRFCTDNGAMIAYAGCQRLLAGQHDGPAISVQPRWPMESLPAV.

Fe cation contacts are provided by histidine 111 and histidine 115. Substrate-binding positions include leucine 134–glycine 138, aspartate 167, glycine 180, and asparagine 276. Residue aspartate 304 participates in Fe cation binding.

This sequence belongs to the KAE1 / TsaD family. It depends on Fe(2+) as a cofactor.

Its subcellular location is the cytoplasm. The catalysed reaction is L-threonylcarbamoyladenylate + adenosine(37) in tRNA = N(6)-L-threonylcarbamoyladenosine(37) in tRNA + AMP + H(+). Functionally, required for the formation of a threonylcarbamoyl group on adenosine at position 37 (t(6)A37) in tRNAs that read codons beginning with adenine. Is involved in the transfer of the threonylcarbamoyl moiety of threonylcarbamoyl-AMP (TC-AMP) to the N6 group of A37, together with TsaE and TsaB. TsaD likely plays a direct catalytic role in this reaction. The sequence is that of tRNA N6-adenosine threonylcarbamoyltransferase from Pseudomonas aeruginosa (strain UCBPP-PA14).